A 229-amino-acid chain; its full sequence is Ribonuclease 3 (229 aa).

The 123-residue stretch at 5-127 (LDRLERKLGY…LIGAIYQDAD (123 aa)) folds into the RNase III domain. Glutamate 40 serves as a coordination point for Mg(2+). Aspartate 44 is an active-site residue. Aspartate 113 and glutamate 116 together coordinate Mg(2+). The active site involves glutamate 116. Positions 154 to 224 (DPKTRLQEFL…AAAALIALGV (71 aa)) constitute a DRBM domain.

This sequence belongs to the ribonuclease III family. As to quaternary structure, homodimer. It depends on Mg(2+) as a cofactor.

Its subcellular location is the cytoplasm. The enzyme catalyses Endonucleolytic cleavage to 5'-phosphomonoester.. Functionally, digests double-stranded RNA. Involved in the processing of primary rRNA transcript to yield the immediate precursors to the large and small rRNAs (23S and 16S). Processes some mRNAs, and tRNAs when they are encoded in the rRNA operon. Processes pre-crRNA and tracrRNA of type II CRISPR loci if present in the organism. The polypeptide is Ribonuclease 3 (Pseudomonas entomophila (strain L48)).